The primary structure comprises 1342 residues: DNA-directed RNA polymerase subunit beta (1342 aa).

The protein belongs to the RNA polymerase beta chain family. As to quaternary structure, the RNAP catalytic core consists of 2 alpha, 1 beta, 1 beta' and 1 omega subunit. When a sigma factor is associated with the core the holoenzyme is formed, which can initiate transcription.

The catalysed reaction is RNA(n) + a ribonucleoside 5'-triphosphate = RNA(n+1) + diphosphate. In terms of biological role, DNA-dependent RNA polymerase catalyzes the transcription of DNA into RNA using the four ribonucleoside triphosphates as substrates. This Pseudoalteromonas atlantica (strain T6c / ATCC BAA-1087) protein is DNA-directed RNA polymerase subunit beta.